Here is a 102-residue protein sequence, read N- to C-terminus: Circadian clock oscillator protein KaiB (102 aa).

It belongs to the KaiB family. In terms of assembly, undergoes a major conformational rearrangment; in the free state forms homotetramers with 2 dimers. When bound to the CI domain of KaiC switches to a monomeric thioredoxin-fold (KaiB(fs)). Monomers, homodimers and homotetramers are detected in solution; at low concentrations only monomers are seen. In vitro forms KaiC(6):KaiB(1) and KaiC(6):KaiB(6) complexes. Only associates with 'Ser-431'-phosphorylated KaiC (and not with doubly phosphorylated KaiC). Complex formation between KaiB and KaiC is regulated by the phosphorylation state of KaiC and by an ATP hydrolysis-driven conformation change in the CI ring of KaiC; complex formation is slow. Slow complex formation is crucial for the timing of the circadian period. In low resolution cryo-EM forms a KaiC(6):KaiB(6) complex. The KaiABC complex composition changes during the circadian cycle to control KaiC phosphorylation. Complexes KaiC(6), KaiA(2-4):KaiC(6), KaiB(6):KaiC(6) and KaiC(6):KaiB(6):KaiA(12) are among the most important forms, many form cooperatively. The KaiB:KaiC complex is more prevalent at 16 hours (in the dark) than at 4 hours (in the light) in the circadian cycle. The KaiA:KaiB complex is only found at 20-24 hours in the circadian cycle (subjective night). Binds to the CI domain of KaiC; SasA and KaiB compete to bind to the CI domain.

It is found in the cytoplasm. The protein localises to the cell membrane. Key component of the KaiABC oscillator complex, which constitutes the main circadian regulator in cyanobacteria. Complex composition changes during the circadian cycle to control KaiC phosphorylation. KaiA stimulates KaiC autophosphorylation, while KaiB sequesters KaiA, leading to KaiC autodephosphorylation. KaiA binding to the KaiC CII domain yields KaiA(2-4):KaiC(6) complexes which stimulate KaiC autophosphorylation. Phospho-Ser-431 KaiC accumulation triggers binding of KaiB to form the KaiB(6):KaiC(6) complex, leading to changes in the output regulators CikA and SasA. KaiB switches to a thioredoxin-like fold (KaiB(fs)) in complex with KaiC. KaiB(6):KaiC(6) formation exposes a site for KaiA binding that sequesters KaiA from the CII domain, making the KaiC(6):KaiB(6):KaiA(12) complex that results in KaiC autodephosphorylation. Complete dephosphorylation of KaiC leads to dissociation of KaiA(2):KaiB(1), completing 1 cycle of the Kai oscillator. Its function is as follows. Circadian oscillations can be generated in vitro by incubating KaiA, KaiB and KaiC with 1 mM ATP. The cycle is self-sustainable for at least 3 cycles and resistant to temperature changes. A very robust clock is reconstituted with KaiA, KaiB, KaiC, SasA, CikA and RpaA; output is measured by transcription from an appropriate reporter. Functionally, a metamorphic protein which reversibly switches between an inactive tetrameric fold and a rare, thioredoxin-like monomeric fold (KaiB(fs)). KaiB(fs) binds phospho-KaiC, KaiA and CikA. KaiA and CikA compete for binding to KaiB(fs), and KaiB(fs) and SasA compete for binding to KaiC, thus the clock oscillator and output signal pathway are tightly coupled. In Synechococcus elongatus (strain ATCC 33912 / PCC 7942 / FACHB-805) (Anacystis nidulans R2), this protein is Circadian clock oscillator protein KaiB.